A 112-amino-acid chain; its full sequence is Secretoglobin family 2B member 24 (112 aa).

Residues 1–23 (MKGTLLLLALLMIGELGFHTTEA) form the signal peptide.

Belongs to the secretoglobin family. Expressed in lacrimal gland, at higher level in males than females.

Its subcellular location is the secreted. This chain is Secretoglobin family 2B member 24 (Scgb2b24), found in Mus musculus (Mouse).